The chain runs to 350 residues: Phenylalanine--tRNA ligase alpha subunit (350 aa).

Glutamate 271 serves as a coordination point for Mg(2+).

Belongs to the class-II aminoacyl-tRNA synthetase family. Phe-tRNA synthetase alpha subunit type 1 subfamily. In terms of assembly, tetramer of two alpha and two beta subunits. It depends on Mg(2+) as a cofactor.

It is found in the cytoplasm. The catalysed reaction is tRNA(Phe) + L-phenylalanine + ATP = L-phenylalanyl-tRNA(Phe) + AMP + diphosphate + H(+). The chain is Phenylalanine--tRNA ligase alpha subunit from Verminephrobacter eiseniae (strain EF01-2).